The sequence spans 248 residues: Triosephosphate isomerase (248 aa).

Substrate contacts are provided by N11 and K13. Catalysis depends on H95, which acts as the Electrophile. E165 serves as the catalytic Proton acceptor.

This sequence belongs to the triosephosphate isomerase family. Homodimer.

It localises to the cytoplasm. The catalysed reaction is D-glyceraldehyde 3-phosphate = dihydroxyacetone phosphate. The enzyme catalyses dihydroxyacetone phosphate = methylglyoxal + phosphate. It functions in the pathway carbohydrate degradation; glycolysis; D-glyceraldehyde 3-phosphate from glycerone phosphate: step 1/1. The protein operates within carbohydrate biosynthesis; gluconeogenesis. Its function is as follows. Triosephosphate isomerase is an extremely efficient metabolic enzyme that catalyzes the interconversion between dihydroxyacetone phosphate (DHAP) and D-glyceraldehyde-3-phosphate (G3P) in glycolysis and gluconeogenesis. Functionally, it is also responsible for the non-negligible production of methylglyoxal a reactive cytotoxic side-product that modifies and can alter proteins, DNA and lipids. In Oryzias latipes (Japanese rice fish), this protein is Triosephosphate isomerase (tpi1).